The chain runs to 249 residues: Triosephosphate isomerase (249 aa).

Residue 9–11 (NWK) coordinates substrate. His-94 (electrophile) is an active-site residue. Glu-166 (proton acceptor) is an active-site residue. Residues Gly-172 and 232-233 (GG) contribute to the substrate site.

It belongs to the triosephosphate isomerase family. As to quaternary structure, homodimer.

The protein resides in the cytoplasm. It carries out the reaction D-glyceraldehyde 3-phosphate = dihydroxyacetone phosphate. Its pathway is carbohydrate biosynthesis; gluconeogenesis. It functions in the pathway carbohydrate degradation; glycolysis; D-glyceraldehyde 3-phosphate from glycerone phosphate: step 1/1. Involved in the gluconeogenesis. Catalyzes stereospecifically the conversion of dihydroxyacetone phosphate (DHAP) to D-glyceraldehyde-3-phosphate (G3P). The protein is Triosephosphate isomerase of Xylella fastidiosa (strain M12).